A 585-amino-acid chain; its full sequence is Probable ubiquitin carboxyl-terminal hydrolase 9 (585 aa).

A disordered region spans residues 1–23 (MSLLRWMGMNSPGSTDRRKSTWE). Residues 41 to 424 (YGLTNYGNTC…TAYVLFYTAA (384 aa)) enclose the USP domain. Cys-50 functions as the Nucleophile in the catalytic mechanism. Positions 85-110 (CTKTNHPESSSSRHSKKKSMENRKSS) are disordered. His-375 serves as the catalytic Proton acceptor. The span at 447–470 (SQLKQESVEVSNLSSTPRSNSTIT) shows a compositional bias: polar residues. The tract at residues 447–473 (SQLKQESVEVSNLSSTPRSNSTITYPD) is disordered. Residue Ser-505 is modified to Phosphoserine. Disordered regions lie at residues 511 to 530 (FHSR…SRSF) and 540 to 585 (KFFG…RSKR). Residues 542-551 (FGSSQSNSPK) are compositionally biased toward polar residues. Phosphoserine is present on Ser-549. The segment covering 553-570 (SPLRDTHKSSDEHSESKH) has biased composition (basic and acidic residues). Residues 574–585 (LPWQFSRSRSKR) show a composition bias toward polar residues.

It belongs to the peptidase C19 family. As to quaternary structure, interacts with bun107 and bun62.

It localises to the nucleus. It is found in the cytoplasm. Its subcellular location is the cell tip. The catalysed reaction is Thiol-dependent hydrolysis of ester, thioester, amide, peptide and isopeptide bonds formed by the C-terminal Gly of ubiquitin (a 76-residue protein attached to proteins as an intracellular targeting signal).. Functionally, ubiquitin C-terminal hydrolase involved in regulating actin dynamics and/or endocytosis at cell tips and septa. The sequence is that of Probable ubiquitin carboxyl-terminal hydrolase 9 (ubp9) from Schizosaccharomyces pombe (strain 972 / ATCC 24843) (Fission yeast).